Consider the following 456-residue polypeptide: Exodeoxyribonuclease 7 large subunit (456 aa).

Belongs to the XseA family. Heterooligomer composed of large and small subunits.

Its subcellular location is the cytoplasm. It catalyses the reaction Exonucleolytic cleavage in either 5'- to 3'- or 3'- to 5'-direction to yield nucleoside 5'-phosphates.. Its function is as follows. Bidirectionally degrades single-stranded DNA into large acid-insoluble oligonucleotides, which are then degraded further into small acid-soluble oligonucleotides. In Escherichia coli O157:H7, this protein is Exodeoxyribonuclease 7 large subunit.